The following is a 195-amino-acid chain: MEIIQNVFNRAENGDRIMISFPDMLSFFTVTKWLNEQFGNPLWILWTDAAVERLNHLGKKLGYPVSGNAVTIGAIKECLFLDVVARYDFYDDVSSLLKSLPVGNVLLISFGVNFLEIFGQGLSKAIEFIIEHENGILCTCTVGEAPDILLPFHDTFIEIKSGEESYLTYKSYVAKLRFSVDGGTIEMSDSFLVSE.

This is an uncharacterized protein from Archaeoglobus fulgidus (strain ATCC 49558 / DSM 4304 / JCM 9628 / NBRC 100126 / VC-16).